The primary structure comprises 147 residues: MDELDRQLINRLQHGLPLVRHPWEALAEELGSTAEVLRLRVQALLDDGTLTRFGPMFDIDRLGGAFTLAALSVPEARFDAVAAQLEAMPEVAHNYRREHQWNMWFVLGCETPQGITETIARIEAQTGLTVLNLPKEETFHVGLHFPV.

Belongs to the Ahb/Nir family. In terms of assembly, probably forms a complex composed of NirD, NirL, NirG and NirH. All proteins are required for the total conversion of siroheme to didecarboxysiroheme.

The catalysed reaction is siroheme + 2 H(+) = 12,18-didecarboxysiroheme + 2 CO2. Its pathway is porphyrin-containing compound metabolism. Involved in heme d1 biosynthesis. Catalyzes the decarboxylation of siroheme into didecarboxysiroheme. The polypeptide is Siroheme decarboxylase NirG subunit (Stutzerimonas stutzeri (Pseudomonas stutzeri)).